The following is a 355-amino-acid chain: Probable dual-specificity RNA methyltransferase RlmN (355 aa).

Glutamate 107 functions as the Proton acceptor in the catalytic mechanism. Residues 113-341 form the Radical SAM core domain; the sequence is TDKRLTVCVS…VSVRYSRGLE (229 aa). The cysteines at positions 120 and 346 are disulfide-linked. Positions 127, 131, and 134 each coordinate [4Fe-4S] cluster. Residues 174–175, serine 204, 227–229, and asparagine 303 each bind S-adenosyl-L-methionine; these read GE and SLH. The active-site S-methylcysteine intermediate is cysteine 346.

It belongs to the radical SAM superfamily. RlmN family. It depends on [4Fe-4S] cluster as a cofactor.

The protein localises to the cytoplasm. The catalysed reaction is adenosine(2503) in 23S rRNA + 2 reduced [2Fe-2S]-[ferredoxin] + 2 S-adenosyl-L-methionine = 2-methyladenosine(2503) in 23S rRNA + 5'-deoxyadenosine + L-methionine + 2 oxidized [2Fe-2S]-[ferredoxin] + S-adenosyl-L-homocysteine. It carries out the reaction adenosine(37) in tRNA + 2 reduced [2Fe-2S]-[ferredoxin] + 2 S-adenosyl-L-methionine = 2-methyladenosine(37) in tRNA + 5'-deoxyadenosine + L-methionine + 2 oxidized [2Fe-2S]-[ferredoxin] + S-adenosyl-L-homocysteine. Specifically methylates position 2 of adenine 2503 in 23S rRNA and position 2 of adenine 37 in tRNAs. In Trichormus variabilis (strain ATCC 29413 / PCC 7937) (Anabaena variabilis), this protein is Probable dual-specificity RNA methyltransferase RlmN.